Reading from the N-terminus, the 339-residue chain is UPF0324 membrane protein M6_Spy0799 (339 aa).

Transmembrane regions (helical) follow at residues Lys7–Leu24, Phe28–His50, Gly57–Leu79, Ala84–Gly106, Ala118–Ile140, Ala150–Leu172, Phe256–Val275, Phe290–Leu307, and Ala314–Leu336.

It belongs to the UPF0324 family.

Its subcellular location is the cell membrane. The polypeptide is UPF0324 membrane protein M6_Spy0799 (Streptococcus pyogenes serotype M6 (strain ATCC BAA-946 / MGAS10394)).